Consider the following 130-residue polypeptide: uncharacterized protein (130 aa).

The Cytoplasmic segment spans residues 1 to 58 (MREQLKLFTREIVDFTFLILSGFDYYQTLLISSNSSKKRPKDSSLLSEKKKKKKKKKK). The disordered stretch occupies residues 34–57 (NSSKKRPKDSSLLSEKKKKKKKKK). A helical membrane pass occupies residues 59–79 (DVLSYLSYLKDLPFVPFLFWQ). Topologically, residues 80-94 (PGYSQREKNPRQHSL) are extracellular. A helical membrane pass occupies residues 95–115 (FIMTITKPGMISMADMNYVVS). Residues 116–130 (KNRSLNRPAERGGNR) are Cytoplasmic-facing.

It localises to the membrane. This is an uncharacterized protein from Saccharomyces cerevisiae (strain ATCC 204508 / S288c) (Baker's yeast).